Consider the following 319-residue polypeptide: Phospho-N-acetylmuramoyl-pentapeptide-transferase (319 aa).

The next 10 helical transmembrane spans lie at 5–25, 51–71, 79–99, 116–136, 149–169, 172–192, 197–217, 224–244, 252–272, and 299–319; these read LIPFISSFALTVIFLPLFIGF, TMGGVVFMLAGVISTLWVLIW, AWILIIAFLGYGIIGFLDDGI, LGQIIIAALIITLAFSDHFAF, SFLFSLFVLFWLVGFSNAVNL, GLDGLATGLSIIAYATYAWIA, NWVIVVFTLSVIGGLVGFFIF, IFMGDAGSLALGGGLATVSIF, LLIGIVFVLETLSVILQVISF, and VDIVFWIVGLIGSIIYLIIWG.

Belongs to the glycosyltransferase 4 family. MraY subfamily. It depends on Mg(2+) as a cofactor.

The protein localises to the cell membrane. It carries out the reaction UDP-N-acetyl-alpha-D-muramoyl-L-alanyl-gamma-D-glutamyl-L-lysyl-D-alanyl-D-alanine + di-trans,octa-cis-undecaprenyl phosphate = Mur2Ac(oyl-L-Ala-gamma-D-Glu-L-Lys-D-Ala-D-Ala)-di-trans,octa-cis-undecaprenyl diphosphate + UMP. Its pathway is cell wall biogenesis; peptidoglycan biosynthesis. Its function is as follows. Catalyzes the initial step of the lipid cycle reactions in the biosynthesis of the cell wall peptidoglycan: transfers peptidoglycan precursor phospho-MurNAc-pentapeptide from UDP-MurNAc-pentapeptide onto the lipid carrier undecaprenyl phosphate, yielding undecaprenyl-pyrophosphoryl-MurNAc-pentapeptide, known as lipid I. This is Phospho-N-acetylmuramoyl-pentapeptide-transferase from Lactobacillus johnsonii (strain CNCM I-12250 / La1 / NCC 533).